The primary structure comprises 202 residues: Nascent polypeptide-associated complex subunit alpha (202 aa).

Over residues 1 to 19 the composition is skewed to basic and acidic residues; the sequence is MADPRVEELPDEEVPKTNV. A disordered region spans residues 1 to 42; that stretch reads MADPRVEELPDEEVPKTNVEDAGSSSESEAGDEPTIPGGAAV. Residues 46–111 enclose the NAC-A/B domain; the sequence is SRNEKKARKA…AKIEDLNATA (66 aa). A compositionally biased stretch (low complexity) spans 117–126; that stretch reads QQLAEAAANE. Residues 117–165 form a disordered region; sequence QQLAEAAANEHAGHDHEHDHGKGKAPEAEAKKEEEEDDGEEVDESGLEA. Residues 127-149 are compositionally biased toward basic and acidic residues; that stretch reads HAGHDHEHDHGKGKAPEAEAKKE. Positions 150–162 are enriched in acidic residues; sequence EEEDDGEEVDESG. One can recognise a UBA domain in the interval 163–202; that stretch reads LEAKDIELVMAQANVSRKKAVKALRENDNDIVNSIMALSI.

It belongs to the NAC-alpha family. Part of the nascent polypeptide-associated complex (NAC), consisting of egd2 and egd1. NAC associates with ribosomes via egd1.

The protein localises to the cytoplasm. It is found in the nucleus. In terms of biological role, component of the nascent polypeptide-associated complex (NAC), a dynamic component of the ribosomal exit tunnel, protecting the emerging polypeptides from interaction with other cytoplasmic proteins to ensure appropriate nascent protein targeting. The NAC complex also promotes mitochondrial protein import by enhancing productive ribosome interactions with the outer mitochondrial membrane and blocks the inappropriate interaction of ribosomes translating non-secretory nascent polypeptides with translocation sites in the membrane of the endoplasmic reticulum. Egd2 may also be involved in transcription regulation. The chain is Nascent polypeptide-associated complex subunit alpha (egd2) from Aspergillus niger (strain ATCC MYA-4892 / CBS 513.88 / FGSC A1513).